Here is a 273-residue protein sequence, read N- to C-terminus: Dermonecrotic toxin LsaSicTox-alphaIB1bi (273 aa).

Histidine 5 is an active-site residue. Mg(2+) contacts are provided by glutamate 25 and aspartate 27. Residue histidine 41 is the Nucleophile of the active site. 2 disulfides stabilise this stretch: cysteine 45/cysteine 51 and cysteine 47/cysteine 190. Aspartate 85 lines the Mg(2+) pocket.

Belongs to the arthropod phospholipase D family. Class II subfamily. It depends on Mg(2+) as a cofactor. As to expression, expressed by the venom gland.

The protein localises to the secreted. It carries out the reaction an N-(acyl)-sphingosylphosphocholine = an N-(acyl)-sphingosyl-1,3-cyclic phosphate + choline. The enzyme catalyses an N-(acyl)-sphingosylphosphoethanolamine = an N-(acyl)-sphingosyl-1,3-cyclic phosphate + ethanolamine. It catalyses the reaction a 1-acyl-sn-glycero-3-phosphocholine = a 1-acyl-sn-glycero-2,3-cyclic phosphate + choline. The catalysed reaction is a 1-acyl-sn-glycero-3-phosphoethanolamine = a 1-acyl-sn-glycero-2,3-cyclic phosphate + ethanolamine. Its function is as follows. Dermonecrotic toxins cleave the phosphodiester linkage between the phosphate and headgroup of certain phospholipids (sphingolipid and lysolipid substrates), forming an alcohol (often choline) and a cyclic phosphate. This toxin acts on sphingomyelin (SM). It may also act on ceramide phosphoethanolamine (CPE), lysophosphatidylcholine (LPC) and lysophosphatidylethanolamine (LPE), but not on lysophosphatidylserine (LPS), and lysophosphatidylglycerol (LPG). It acts by transphosphatidylation, releasing exclusively cyclic phosphate products as second products. Induces dermonecrosis, hemolysis, increased vascular permeability, edema, inflammatory response, and platelet aggregation. This is Dermonecrotic toxin LsaSicTox-alphaIB1bi from Loxosceles sabina (Tucson recluse spider).